The chain runs to 448 residues: MGKLFGTDGIRGIANEELTPELAYQLGRVGAYVLIKGAKDAKVVIGRDTRISGDLLTSAITSGFLSMGVDVIDLGVIPTPAVAYLTRELQGNCGIVISASHNPAEYNGIKFFNHQGYKLPDEIEEQIETYILNNEEIENRVTGAAVGKRIELKEATRLYMDYLKTTIECRFEGLKIAMDLGNGAVYEAAPQLLKELGAEVIIVNDQPDGMNINEGCGSTHPEVVQRLVKENKADVGLSFDGDADRLIAVDNTGAIVDGDSMMAICGTNLNEKHILNKNTIVATVMSNIGLDLAMKEQGCQVVKTKVGDRYVLEEMIKEGYTLGGEQSGHIIFLKYNTTGDGLLTALQLIATVKESGKTLSELSGMMTSYPQVLVNAKVKNENKLAYMEDEVIMGEIKMIEEKMNGVGRVLIRPSGTEPLVRVMLEGQEQAELEVLAHGLAQLIESKLG.

The active-site Phosphoserine intermediate is the S100. S100, D240, D242, and D244 together coordinate Mg(2+). S100 carries the post-translational modification Phosphoserine.

Belongs to the phosphohexose mutase family. It depends on Mg(2+) as a cofactor. Post-translationally, activated by phosphorylation.

It catalyses the reaction alpha-D-glucosamine 1-phosphate = D-glucosamine 6-phosphate. In terms of biological role, catalyzes the conversion of glucosamine-6-phosphate to glucosamine-1-phosphate. This is Phosphoglucosamine mutase from Alkaliphilus metalliredigens (strain QYMF).